A 367-amino-acid polypeptide reads, in one-letter code: Putative threonine-phosphate decarboxylase (367 aa).

O-phospho-L-threonine-binding positions include 12 to 13 (HG), asparagine 29, and asparagine 152. Lysine 213 carries the post-translational modification N6-(pyridoxal phosphate)lysine. O-phospho-L-threonine contacts are provided by arginine 320 and arginine 334.

It belongs to the class-II pyridoxal-phosphate-dependent aminotransferase family. The cofactor is pyridoxal 5'-phosphate.

It catalyses the reaction O-phospho-L-threonine + H(+) = (R)-1-aminopropan-2-yl phosphate + CO2. Its pathway is cofactor biosynthesis; adenosylcobalamin biosynthesis. Its function is as follows. Decarboxylates L-threonine-O-3-phosphate to yield (R)-1-amino-2-propanol O-2-phosphate, the precursor for the linkage between the nucleotide loop and the corrin ring in cobalamin. The protein is Putative threonine-phosphate decarboxylase (cobD) of Caldanaerobacter subterraneus subsp. tengcongensis (strain DSM 15242 / JCM 11007 / NBRC 100824 / MB4) (Thermoanaerobacter tengcongensis).